The primary structure comprises 136 residues: Small ribosomal subunit protein bS6 (136 aa).

Residues 117–130 show a composition bias toward basic and acidic residues; it reads EERSRSSRRQREDV. The interval 117-136 is disordered; the sequence is EERSRSSRRQREDVIEGVEL.

It belongs to the bacterial ribosomal protein bS6 family.

Functionally, binds together with bS18 to 16S ribosomal RNA. The sequence is that of Small ribosomal subunit protein bS6 from Bartonella quintana (strain Toulouse) (Rochalimaea quintana).